Reading from the N-terminus, the 587-residue chain is V-type proton ATPase catalytic subunit A (587 aa).

243 to 250 is a binding site for ATP; the sequence is GAFGCGKT.

The protein belongs to the ATPase alpha/beta chains family. As to quaternary structure, V-ATPase is a heteromultimeric enzyme composed of a peripheral catalytic V1 complex (main components: subunits A, B, C, D, E, and F) attached to an integral membrane V0 proton pore complex (main component: the proteolipid protein).

It carries out the reaction ATP + H2O + 4 H(+)(in) = ADP + phosphate + 5 H(+)(out). Catalytic subunit of the peripheral V1 complex of vacuolar ATPase. V-ATPase vacuolar ATPase is responsible for acidifying a variety of intracellular compartments in eukaryotic cells. The chain is V-type proton ATPase catalytic subunit A from Cyanidium caldarium (Red alga).